The sequence spans 209 residues: Imidazole glycerol phosphate synthase subunit HisH (209 aa).

In terms of domain architecture, Glutamine amidotransferase type-1 spans 1 to 205 (MIAIIDYGMG…QGVVEAWKSS (205 aa)). Cys-79 functions as the Nucleophile in the catalytic mechanism. Active-site residues include His-180 and Glu-182.

Heterodimer of HisH and HisF.

It localises to the cytoplasm. It carries out the reaction 5-[(5-phospho-1-deoxy-D-ribulos-1-ylimino)methylamino]-1-(5-phospho-beta-D-ribosyl)imidazole-4-carboxamide + L-glutamine = D-erythro-1-(imidazol-4-yl)glycerol 3-phosphate + 5-amino-1-(5-phospho-beta-D-ribosyl)imidazole-4-carboxamide + L-glutamate + H(+). The catalysed reaction is L-glutamine + H2O = L-glutamate + NH4(+). It participates in amino-acid biosynthesis; L-histidine biosynthesis; L-histidine from 5-phospho-alpha-D-ribose 1-diphosphate: step 5/9. Functionally, IGPS catalyzes the conversion of PRFAR and glutamine to IGP, AICAR and glutamate. The HisH subunit catalyzes the hydrolysis of glutamine to glutamate and ammonia as part of the synthesis of IGP and AICAR. The resulting ammonia molecule is channeled to the active site of HisF. The chain is Imidazole glycerol phosphate synthase subunit HisH from Bacillus cereus (strain B4264).